The following is a 418-amino-acid chain: FAD-dependent monooxygenase fmqB (418 aa).

FAD contacts are provided by Val12 and Arg68. The active site involves Arg147. FAD-binding residues include Asp272 and Gly285.

The protein belongs to the paxM FAD-dependent monooxygenase family.

The protein resides in the cytoplasm. It participates in alkaloid biosynthesis. FAD-dependent monooxygenase; part of the gene cluster that mediates the biosynthesis of the antitumor fumiquinazolines that confer a dual-usage capability to defend against phagocytes in the environment and animal hosts. The simplest member is fumiquinazoline F (FQF) with a 6-6-6 tricyclic core derived from anthranilic acid (Ant), tryptophan (Trp), and alanine (Ala). The trimodular NRPS fmqA is responsible for FQF formation. Modules 1, 2 and 3 of fmqA are predicted to activate and load Ant, Trp and Ala, respectively, providing for the assembly of an Ant-Trp-Ala-S-enzyme intermediate that would undergo double cyclization for chain release and generation of the tricyclic 6-6-6 product fumiquinazoline F. The presence of an E domain predicted for module 2 of fmqA is consistent with epimerization of L-Trp to D-Trp during assembly to generate the R-stereocenter at C14 of FQF. The FAD-dependent monooxygenase fmqB and the monomodular NRPS fmqC then maturate FQF to FQA. FmqB oxidizes the 2',3'-double bond of the indole side chain of FQF, and fmqC activates L-Ala as the adenylate, installs it as the pantetheinyl thioester on its carrier protein domain, and acylates the oxidized indole for subsequent intramolecular cyclization to create the 6-5-5-imidazolindolone of FQA. The FAD-linked oxidoreductase fmqD introduces a third layer of scaffold complexity by converting FQA to the spirohemiaminal FQC, presumably by catalyzing the formation of a transient imine within the pyrazinone ring. FQC subsequently converts nonenzymatically to the known cyclic aminal FQD. The chain is FAD-dependent monooxygenase fmqB from Aspergillus fumigatus (strain ATCC MYA-4609 / CBS 101355 / FGSC A1100 / Af293) (Neosartorya fumigata).